The primary structure comprises 183 residues: ATP synthase subunit delta (183 aa).

The protein belongs to the ATPase delta chain family. F-type ATPases have 2 components, F(1) - the catalytic core - and F(0) - the membrane proton channel. F(1) has five subunits: alpha(3), beta(3), gamma(1), delta(1), epsilon(1). F(0) has three main subunits: a(1), b(2) and c(10-14). The alpha and beta chains form an alternating ring which encloses part of the gamma chain. F(1) is attached to F(0) by a central stalk formed by the gamma and epsilon chains, while a peripheral stalk is formed by the delta and b chains.

It localises to the cell inner membrane. F(1)F(0) ATP synthase produces ATP from ADP in the presence of a proton or sodium gradient. F-type ATPases consist of two structural domains, F(1) containing the extramembraneous catalytic core and F(0) containing the membrane proton channel, linked together by a central stalk and a peripheral stalk. During catalysis, ATP synthesis in the catalytic domain of F(1) is coupled via a rotary mechanism of the central stalk subunits to proton translocation. In terms of biological role, this protein is part of the stalk that links CF(0) to CF(1). It either transmits conformational changes from CF(0) to CF(1) or is implicated in proton conduction. The chain is ATP synthase subunit delta from Nitratidesulfovibrio vulgaris (strain ATCC 29579 / DSM 644 / CCUG 34227 / NCIMB 8303 / VKM B-1760 / Hildenborough) (Desulfovibrio vulgaris).